A 380-amino-acid chain; its full sequence is Cytochrome b (380 aa).

The next 4 membrane-spanning stretches (helical) occupy residues 33 to 53 (FGSLLGLCLITQILTGLFLAM), 77 to 98 (WLIRNIHANGASFFFICLYLHV), 113 to 133 (WNIGVILLLLTMMTAFVGYVL), and 178 to 198 (FFAFHFLLPFVIAGASMIHLL). His83 and His97 together coordinate heme b. Residues His182 and His196 each contribute to the heme b site. Residue His201 coordinates a ubiquinone. The next 4 membrane-spanning stretches (helical) occupy residues 226–246 (YKDLFGFTLMLVGLTSVALFS), 288–308 (LGGVLALLFSILVLMLVPMLH), 320–340 (LSQILFWALVADMLVLTWIGG), and 347–367 (FVLIGQVASTVYFALFLIALP).

This sequence belongs to the cytochrome b family. The cytochrome bc1 complex contains 3 respiratory subunits (MT-CYB, CYC1 and UQCRFS1), 2 core proteins (UQCRC1 and UQCRC2) and probably 6 low-molecular weight proteins. It depends on heme b as a cofactor.

It localises to the mitochondrion inner membrane. Component of the ubiquinol-cytochrome c reductase complex (complex III or cytochrome b-c1 complex) that is part of the mitochondrial respiratory chain. The b-c1 complex mediates electron transfer from ubiquinol to cytochrome c. Contributes to the generation of a proton gradient across the mitochondrial membrane that is then used for ATP synthesis. This is Cytochrome b (mt-cyb) from Acipenser transmontanus (White sturgeon).